We begin with the raw amino-acid sequence, 282 residues long: MAVDPFDSALDLLRRLNPKQTTDHLNAIISIAPDLTEDLLSSVDQPLTVRRCKQTGRDYLLCDYNRDGDSYRSPWSNQFDPPLDEAGSGGVGAGGNEGAGEGAIPSERVRKMEVKANEAFDVYRDLYYEGGVSSVYFWNLDDGFAGVVLLKKSSPQGGNSEGVWDSIHVFEAIERGRSTHYKLTSTVILTLSTSGGNLGEMDLSGNMTRQVEQDLPVENDDSHIANVGRLVEDMELKMRNLLQEVYFGKAKDVVGDLRSIGSLSEGARDREAQRELIGSMRK.

The tract at residues 73 to 103 (SPWSNQFDPPLDEAGSGGVGAGGNEGAGEGA) is disordered. Residues 87–101 (GSGGVGAGGNEGAGE) show a composition bias toward gly residues.

It belongs to the F-actin-capping protein beta subunit family. Component of the F-actin capping complex, composed of a heterodimer of an alpha and a beta subunit.

It localises to the cytoplasm. The protein localises to the cytoskeleton. Its subcellular location is the actin patch. F-actin-capping proteins bind in a Ca(2+)-independent manner to the fast growing ends of actin filaments (barbed end) thereby blocking the exchange of subunits at these ends. Unlike other capping proteins (such as gelsolin and severin), these proteins do not sever actin filaments. The polypeptide is F-actin-capping protein subunit beta (CAP2) (Gibberella zeae (strain ATCC MYA-4620 / CBS 123657 / FGSC 9075 / NRRL 31084 / PH-1) (Wheat head blight fungus)).